A 555-amino-acid chain; its full sequence is MEPVTKWSPKQVVDWTRGLDDCLQPYVHKFEREKIDGEQLLKISHQDLEELGVTRIGHQELVLEAVDLLCALNYGLETDNMKNLVLKLRASSHNLQNYISSRRKSPAYDGNTSRKPPNEFLTSVVELIGAAKALLAWLDRAPFTGITDLSVTKNKIIQLCLDLTTAVQKDCLVAEMEDKVLNVVKVLNGICDKMMHSTTDPVMSQCACLEEVHLPNVRPGEGLGMYIKSTYDGLHVITGTTENSPADRSQKIHAGDEVIQVNRQTVVGWQLKNLVKKLRENPTGVVLLLKKRPTGSFSFTPAPLKNLRWKPPLVQTSPPPTTTQSPESTMDASLKKEKPAILDLYIPPPPAVPYSPRDENVSFSYRGHTKSKQPLPGRKGSESPNSFLDQESQRRRFTITDSDQLPGYSVGTNILPIKMRGKTPSYGKPRPLSMPADGNWMGIVDPFAKPRGHGRKGEDALCRYFSNERITPIIEESASPVYRFSRPLTERHLVRGADYIRGSRCYINSDLHSSATIPFQEEGPKKKSASSSAKASSGEPSLLVSWLTRLKLLTH.

The SAM domain maps to 7-72 (WSPKQVVDWT…LEAVDLLCAL (66 aa)). The region spanning 80–174 (NMKNLVLKLR…TAVQKDCLVA (95 aa)) is the CRIC domain. The region spanning 211-293 (EVHLPNVRPG…GVVLLLKKRP (83 aa)) is the PDZ domain. 3 disordered regions span residues 308–333 (RWKPPLVQTSPPPTTTQSPESTMDAS), 348–391 (PPPA…LDQE), and 518–538 (PFQEEGPKKKSASSSAKASSG). A compositionally biased stretch (low complexity) spans 311–329 (PPLVQTSPPPTTTQSPEST). The DUF1170 domain occupies 325–546 (SPESTMDASL…SGEPSLLVSW (222 aa)). 2 positions are modified to phosphoserine: S381 and S383.

It belongs to the CNKSR family. In terms of assembly, interacts with epithelial sodium channel ENaC. Interacts directly with SCNN1A (ENaC subunit alpha) and SCNN1B (ENaC subunit beta) C-terminal tails. Interacts with ENaC regulatory proteins NEDD4L, RAF1 and SGK1.

The protein resides in the cytoplasm. The protein localises to the apical cell membrane. Its function is as follows. Involved in transepithelial sodium transport. Regulates aldosterone-induced and epithelial sodium channel (ENaC)-mediated sodium transport through regulation of ENaC cell surface expression. Acts as a scaffold protein coordinating the assembly of an ENaC-regulatory complex (ERC). This is Connector enhancer of kinase suppressor of ras 3 (Cnksr3) from Rattus norvegicus (Rat).